Consider the following 164-residue polypeptide: 6,7-dimethyl-8-ribityllumazine synthase (164 aa).

5-amino-6-(D-ribitylamino)uracil is bound by residues phenylalanine 24, 62–64 (SFE), and 86–88 (AVI). Residue 91-92 (QT) participates in (2S)-2-hydroxy-3-oxobutyl phosphate binding. Histidine 94 functions as the Proton donor in the catalytic mechanism. A 5-amino-6-(D-ribitylamino)uracil-binding site is contributed by phenylalanine 119. A (2S)-2-hydroxy-3-oxobutyl phosphate-binding site is contributed by arginine 133.

It belongs to the DMRL synthase family.

The catalysed reaction is (2S)-2-hydroxy-3-oxobutyl phosphate + 5-amino-6-(D-ribitylamino)uracil = 6,7-dimethyl-8-(1-D-ribityl)lumazine + phosphate + 2 H2O + H(+). Its pathway is cofactor biosynthesis; riboflavin biosynthesis; riboflavin from 2-hydroxy-3-oxobutyl phosphate and 5-amino-6-(D-ribitylamino)uracil: step 1/2. Its function is as follows. Catalyzes the formation of 6,7-dimethyl-8-ribityllumazine by condensation of 5-amino-6-(D-ribitylamino)uracil with 3,4-dihydroxy-2-butanone 4-phosphate. This is the penultimate step in the biosynthesis of riboflavin. This chain is 6,7-dimethyl-8-ribityllumazine synthase, found in Synechocystis sp. (strain ATCC 27184 / PCC 6803 / Kazusa).